The sequence spans 1009 residues: Type VII secretion system accessory factor EsaA (1009 aa).

Transmembrane regions (helical) follow at residues Ile-7 to Val-27, Ile-822 to Phe-842, Ala-869 to Ile-889, Lys-903 to Leu-923, Ser-928 to Leu-948, and Ile-979 to Phe-999.

Belongs to the EsaA family. In terms of assembly, homodimer. Interacts with EssB.

It is found in the cell membrane. Component of the type VII secretion system (Ess). Provides together with EssB and other components such as EssC and EssE a secretion platform across the cytoplasmic membrane in the host. In Staphylococcus aureus (strain MRSA252), this protein is Type VII secretion system accessory factor EsaA.